The following is a 4092-amino-acid chain: Dynein heavy chain, cytoplasmic (4092 aa).

The segment at 1 to 1757 (MCKNEARLAN…FISQSGYLLQ (1757 aa)) is stem. 6 coiled-coil regions span residues 154-175 (VETI…QQLH), 486-508 (KLEQ…LQNT), 542-566 (KVLE…TGLE), 932-959 (VIKL…YVKE), 1042-1063 (YERD…VEDM), and 1681-1705 (KGLL…LVEY). AAA stretches follow at residues 1758-1979 (YKFE…VLRN), 2036-2273 (QCLK…NDLV), 2379-2628 (SLEA…LVRG), and 2722-2984 (TFCD…KVGV). Residues 1796–1803 (GPAGTGKT), 2074–2081 (GKAGCGKT), 2418–2425 (GPPGSGKT), and 2760–2767 (GASRTGKT) contribute to the ATP site. Coiled-coil stretches lie at residues 2993–3092 (IDGL…KRKE), 3242–3300 (KTKA…KSLT), and 3532–3608 (ITLT…EEFF). Residues 2993–3300 (IDGLRALVKL…RSISLVKSLT (308 aa)) form a stalk region. AAA stretches follow at residues 3370–3599 (LVTL…NIEK) and 3760–3970 (LNWF…YLEN).

The protein belongs to the dynein heavy chain family. The dynein complex consists of at least two heavy chains and a number of intermediate and light chains. Interacts with DYN3.

Its subcellular location is the cytoplasm. The protein resides in the cytoskeleton. Functionally, cytoplasmic dynein acts as a motor for the intracellular retrograde motility of vesicles and organelles along microtubules. Dynein has ATPase activity; the force-producing power stroke is thought to occur on release of ADP. Required to maintain uniform nuclear distribution in hyphae. May play an important role in the proper orientation of the mitotic spindle into the budding daughter cell yeast. Probably required for normal progression of the cell cycle. The sequence is that of Dynein heavy chain, cytoplasmic (DYN1) from Saccharomyces cerevisiae (strain ATCC 204508 / S288c) (Baker's yeast).